The chain runs to 192 residues: Bifunctional protein PyrR (192 aa).

The PRPP-binding signature appears at 107–119; that stretch reads VVLVDDVLFSGRT.

It belongs to the purine/pyrimidine phosphoribosyltransferase family. PyrR subfamily.

The catalysed reaction is UMP + diphosphate = 5-phospho-alpha-D-ribose 1-diphosphate + uracil. Regulates the transcription of the pyrimidine nucleotide (pyr) operon in response to exogenous pyrimidines. In terms of biological role, also displays a weak uracil phosphoribosyltransferase activity which is not physiologically significant. The protein is Bifunctional protein PyrR of Corynebacterium efficiens (strain DSM 44549 / YS-314 / AJ 12310 / JCM 11189 / NBRC 100395).